Reading from the N-terminus, the 150-residue chain is Leukotriene C4 synthase (150 aa).

The Cytoplasmic segment spans residues 1-6 (MKDEVA). The helical transmembrane segment at 7–27 (LLATVTLVGVLLQAYFSLQVI) threads the bilayer. The Lumenal portion of the chain corresponds to 28-48 (SARRAFHVSPPLTSGPPEFER). Residue Arg-30 coordinates glutathione. Arg-31 acts as the Proton donor in catalysis. Ser-36 is subject to Phosphoserine. Residues 49–69 (VFRAQVNCSEYFPLFLATLWV) traverse the membrane as a helical segment. Glutathione contacts are provided by residues 51–55 (RAQVN), Gln-53, and 58–59 (EY). Over 70–73 (AGIF) the chain is Cytoplasmic. Residues 74–94 (FHEGAAALCGLFYLFARLRYF) form a helical membrane-spanning segment. Position 93–97 (93–97 (YFQGY)) interacts with glutathione. Residues 95–104 (QGYARSAQLR) are Lumenal-facing. The active-site Proton acceptor is the Arg-104. Residues 105–124 (LTPLYASARALWLLVAMAAL) form a helical membrane-spanning segment. The Cytoplasmic portion of the chain corresponds to 125–150 (GLLVHFLPGTLRTALFRWLQMLLPMA).

Belongs to the MAPEG family. Homotrimer. Interacts with ALOX5AP and ALOX5. Phosphorylation at Ser-36 by RPS6KB1 inhibits the leukotriene-C4 synthase activity. In terms of tissue distribution, widely expressed.

The protein localises to the nucleus outer membrane. Its subcellular location is the endoplasmic reticulum membrane. The protein resides in the nucleus membrane. The catalysed reaction is leukotriene C4 = leukotriene A4 + glutathione. The enzyme catalyses (13S,14S)-epoxy-(4Z,7Z,9E,11E,16Z,19Z)-docosahexaenoate + glutathione = (13R)-S-glutathionyl-(14S)-hydroxy-(4Z,7Z,9E,11E,16Z,19Z)-docosahexaenoate. It functions in the pathway lipid metabolism; leukotriene C4 biosynthesis. Inhibited by MK886. Its function is as follows. Catalyzes the conjugation of leukotriene A4 with reduced glutathione (GSH) to form leukotriene C4 with high specificity. Can also catalyze the transfer of a glutathionyl group from glutathione (GSH) to 13(S),14(S)-epoxy-docosahexaenoic acid to form maresin conjugate in tissue regeneration 1 (MCTR1), a bioactive lipid mediator that possess potent anti-inflammatory and proresolving actions. This chain is Leukotriene C4 synthase (Ltc4s), found in Mus musculus (Mouse).